A 287-amino-acid polypeptide reads, in one-letter code: Elongation factor Ts (287 aa).

Positions 80 to 83 (TDFL) are involved in Mg(2+) ion dislocation from EF-Tu.

It belongs to the EF-Ts family.

The protein resides in the cytoplasm. Functionally, associates with the EF-Tu.GDP complex and induces the exchange of GDP to GTP. It remains bound to the aminoacyl-tRNA.EF-Tu.GTP complex up to the GTP hydrolysis stage on the ribosome. The protein is Elongation factor Ts of Pseudomonas syringae pv. tomato (strain ATCC BAA-871 / DC3000).